The sequence spans 424 residues: Histidine--tRNA ligase (424 aa).

The protein belongs to the class-II aminoacyl-tRNA synthetase family. Homodimer.

It is found in the cytoplasm. The catalysed reaction is tRNA(His) + L-histidine + ATP = L-histidyl-tRNA(His) + AMP + diphosphate + H(+). This chain is Histidine--tRNA ligase, found in Klebsiella pneumoniae (strain 342).